The chain runs to 462 residues: Integrator complex subunit 12 (462 aa).

The segment at 39–132 (LARGIDSSYR…PETRSSPITV (94 aa)) is disordered. Residues 59–86 (ISSTKTVSVKQEPKTSSSLPSGNNNGKV) show a composition bias toward polar residues. K68 participates in a covalent cross-link: Glycyl lysine isopeptide (Lys-Gly) (interchain with G-Cter in SUMO2). The segment covering 88–125 (TTEKVKKEGEKRPADKMKSDITEGADVPKKPRLEKPET) has biased composition (basic and acidic residues). The residue at position 128 (S128) is a Phosphoserine. The PHD-type zinc-finger motif lies at 159-215 (GLACVVCRQMTVASGNQLVECQECHNLYHQDCHKPQVTDKEVTDPRLVWYCARCTRQ). Residue K254 forms a Glycyl lysine isopeptide (Lys-Gly) (interchain with G-Cter in SUMO2) linkage. The segment covering 305-328 (PSTAKLSSAAQNNSGKPATSSANQ) has biased composition (polar residues). Residues 305–462 (PSTAKLSSAA…KKAAQKKLKK (158 aa)) form a disordered region. 2 stretches are compositionally biased toward low complexity: residues 347-358 (KIGSSNSTSPTV) and 382-431 (VSKV…PSAS). Residues 434-443 (GPTSQESQLN) are compositionally biased toward polar residues. Positions 449–462 (QMVKKKAAQKKLKK) are enriched in basic residues.

This sequence belongs to the Integrator subunit 12 family. In terms of assembly, component of the Integrator complex, composed of core subunits INTS1, INTS2, INTS3, INTS4, INTS5, INTS6, INTS7, INTS8, INTS9/RC74, INTS10, INTS11/CPSF3L, INTS12, INTS13, INTS14 and INTS15. The core complex associates with protein phosphatase 2A subunits PPP2CA and PPP2R1A, to form the Integrator-PP2A (INTAC) complex. Post-translationally, dephosphorylated at Ser-128 by the PNUTS-PP1 complex, promoting RNA polymerase II transcription pause-release.

Its subcellular location is the nucleus. Component of the integrator complex, a multiprotein complex that terminates RNA polymerase II (Pol II) transcription in the promoter-proximal region of genes. The integrator complex provides a quality checkpoint during transcription elongation by driving premature transcription termination of transcripts that are unfavorably configured for transcriptional elongation: the complex terminates transcription by (1) catalyzing dephosphorylation of the C-terminal domain (CTD) of Pol II subunit POLR2A/RPB1 and SUPT5H/SPT5, (2) degrading the exiting nascent RNA transcript via endonuclease activity and (3) promoting the release of Pol II from bound DNA. The integrator complex is also involved in terminating the synthesis of non-coding Pol II transcripts, such as enhancer RNAs (eRNAs), small nuclear RNAs (snRNAs), telomerase RNAs and long non-coding RNAs (lncRNAs). Mediates recruitment of cytoplasmic dynein to the nuclear envelope, probably as component of the integrator complex. The chain is Integrator complex subunit 12 (INTS12) from Bos taurus (Bovine).